We begin with the raw amino-acid sequence, 63 residues long: MLILTRRVGETLMVGDDVTVTVLGVKGNQVRIGVNAPKEVSVHREEIYMRIQAEKGGQPGSAE.

Belongs to the CsrA/RsmA family. In terms of assembly, homodimer; the beta-strands of each monomer intercalate to form a hydrophobic core, while the alpha-helices form wings that extend away from the core.

Its subcellular location is the cytoplasm. In terms of biological role, a key translational regulator that binds mRNA to regulate translation initiation and/or mRNA stability. Mediates global changes in gene expression, shifting from rapid growth to stress survival by linking envelope stress, the stringent response and the catabolite repression systems. Usually binds in the 5'-UTR; binding at or near the Shine-Dalgarno sequence prevents ribosome-binding, repressing translation, binding elsewhere in the 5'-UTR can activate translation and/or stabilize the mRNA. Its function is antagonized by small RNA(s). This is Translational regulator CsrA from Alteromonas mediterranea (strain DSM 17117 / CIP 110805 / LMG 28347 / Deep ecotype).